The chain runs to 431 residues: Glucose-1-phosphate adenylyltransferase (431 aa).

Lys39 serves as a coordination point for beta-D-fructose 1,6-bisphosphate. AMP contacts are provided by Arg40, His46, and Arg52. An alpha-D-glucose 1-phosphate-binding site is contributed by Tyr114. Residue Arg130 coordinates AMP. Alpha-D-glucose 1-phosphate-binding positions include Gly179, 194 to 195 (EK), and Ser212. Positions 370 and 386 each coordinate AMP. Residues 419–423 (REMLR) and 429–431 (QER) contribute to the beta-D-fructose 1,6-bisphosphate site.

The protein belongs to the bacterial/plant glucose-1-phosphate adenylyltransferase family. As to quaternary structure, homotetramer.

It carries out the reaction alpha-D-glucose 1-phosphate + ATP + H(+) = ADP-alpha-D-glucose + diphosphate. The protein operates within glycan biosynthesis; glycogen biosynthesis. With respect to regulation, allosterically activated by fructose-1,6-bisphosphate (F16BP) and inhibited by AMP. In terms of biological role, involved in the biosynthesis of ADP-glucose, a building block required for the elongation reactions to produce glycogen. Catalyzes the reaction between ATP and alpha-D-glucose 1-phosphate (G1P) to produce pyrophosphate and ADP-Glc. This is Glucose-1-phosphate adenylyltransferase from Shigella boydii serotype 18 (strain CDC 3083-94 / BS512).